Consider the following 203-residue polypeptide: Ribosomal RNA small subunit methyltransferase G (203 aa).

Residues glycine 75, leucine 80, 126-127 (VE), and arginine 141 each bind S-adenosyl-L-methionine.

This sequence belongs to the methyltransferase superfamily. RNA methyltransferase RsmG family.

The protein localises to the cytoplasm. It carries out the reaction guanosine(527) in 16S rRNA + S-adenosyl-L-methionine = N(7)-methylguanosine(527) in 16S rRNA + S-adenosyl-L-homocysteine. In terms of biological role, specifically methylates the N7 position of guanine in position 527 of 16S rRNA. The sequence is that of Ribosomal RNA small subunit methyltransferase G from Ruthia magnifica subsp. Calyptogena magnifica.